A 2931-amino-acid polypeptide reads, in one-letter code: MGNLKNINLKEKGVAIVGIGFRIPSGNNENSISSPDDLFNNLKNGFDGVSSTSERWSDNFHKLGEISSPNAGLLPFKEWKSFDPLFFGINPSEAPLIDPQQRLLLKCTWEALEDASIDPISIRGTNTSVFIGSSTIDYLHTNKHQDSVLKNAIAQSTSAISNRISYCFDFNGPSLSIDTACSSSLNAVSQGYHSILNGTSNMSIVGGVNLILDVDIIKAYSILSMLSKTHGKCKTFDESGDGFTRGECVGVVVLKNLQDAVKDGNRIYCVINGSSSNVDGNGNMDKVNFYSPSKQSQFNNINSAFKSTNDKLSINDIQYIEAHGTGTKTGDPIETEAISMAFKNRDKSTPILIGSIKSNIGHCEAGSGVASLIKCCLMFKYQCFLPNIHFKNPNPLIKFNEWNLKVVTSPIPFNKRNNEKPVSMMINNFGVTGSNCCLLISEFKNNNNFKENINLESQSVNDRVLIPFSANSSNSLNQYQSKFKNIINNQFNFIDFTANQIYSKSNFLYQRSVVIASNSNELFENISNKKQIQTKNSIISNMSFKGKNPITIFVFSGQGSQYPKMALELYNNEVIFKKSIDLIDSKLSKYYGFSVWEKVKTIKDDDLTSIHDPIFAQPALCMISVSLFELYYHWGVNPSFILGHSLGEISASYCSGMIDLDTFCYTVYQRSIAQSKTNGCGRMLSINISDEEFKSMYSQKYPQIEIACYNSPQSIVVAGNESILNEISKELKEKEIFTTMLGSLSSFHTSSQQCTKDSILQLNIESNQPKVPIFSTVTTNLFNESNRFNSQYVYDNIIKPVKFTQTISNIYKHIESNQLNNEIVFIEIAPHPTLLFYIKQMVPSSLNESVSVYSALHKKKNDVEEFQQTISNLYCQNGYNINFKCQFNNKKSNQSINLPLYQWDEELYFTQAQTLEQHRKEGPPIDHLGTSNSYNSPFNNSYRTSIDIKNKPFLYLKGHMVKGKYYFPGCGYIDNIIQLYKNQDIFISFIEFKTPLILIEGINQYLQTNIQQTGKSEYRAQFHFKDQKSNEWIQSSNANFQLLDHGNDIPPKYNIKEIIENKCNLSKLTKNELYTHIKSKTGLNYTGVFQGVTECYIGGDCTLSVVSLESQTNSFLNIPILDTCLHGMIGLSNDQCQIVFDKAIGFKYYSSNIPANLKDYKDSVYVYSHLKSKSVDSFFGSIIVMLSDGSVLYEIEEVVCKSLIPIKDSLKIEYPNDELYKVHLQSKDSPIPTPSSFKSIIYENDFFHSALNIPEDLFKYISTLFYKDIIKRCPEININKINSHSVNEIISSFSKISKHERLFRFVFETIKENGILNSLEENDDAYFEFNEVIIKSSRIISKLLFPLESDNDNEDLPQSLFQNGLMDKIYKCRYLRKKNQMISHVIKHSIKEIINNNIIIRILEFGGGTASLSVEVIEEIIALLQENPNYQVEIEYTWSDISPAFIADAKNKINKIINDAAITNGFNVIYRPLKIDESLIETQSINPSYYDFVIMSNVLHVVKNIKQAVEQMYQLLTPNGQLLFLEPPYKSVLNDSIVGSFEQWWSFTDTDIRKDRCSMSQQSWCQLLKTCNFKDIAMSKECIFVGIVIHAQKPPISLLNSQPKRDNIIIYGGGNPIFVENIKLYSNSKSLIQIETIQEFNQLLSQSTITNDSIIYFIKTLETLSLDNFKQITLEYIEINRKLLQINSLCKHVLIVSDSRKTNYLASSVVGAARYFDEFQQLKLNTLDFDYDSTQNYINSNNKDMVQFINILTDSKTNVHKEMIIINNKVYYEIVQKEKNLKLKYNSESFENQNNLMCSLSPNLEYQLQSKQIKLRDNQVEVKTIATGINYKDYLNFSGSNSNGDDNTGLPQFGYEFSGIITRVGNNVKDYKVGDNVFGLSNSCTSSHIVTNYKKIQIKPSNLSHNEASSIPIDYLTSFMSLFNIGSLNIEDNESILIHLGSDGFGLSTFEILKWKGFNSNLFVTVNSYETKRYLQDNYGDFITGIYSNTDKSYVTEINKKLIKLGSKKKGVDLILNTLPSDFMDSNFKLLAKYGRIIDLTSNHLNQSEFLKNINFKYNHGYHNFELSLIQKNKIHKCLYEISNAFENGELKTIPIKEFTNLNIKDAIKYITNNKIEKITVSHDHEIYSDIIYRSLDEKEFSILKSNYQINSNNLGKNILVTGQSGIILEILKWIIKYSNINTIENVIILSRSSLKWELELLINETKLSNNNIKFHFKSVDIGDSEQVDNAINEILNENQQITNIDSIYHFAFQQITCKVQEINMKHLDISHGAKSMGAINLHNQSIKRNWKLINFVMASSAISLIGSTDLCTYVCANALLDSFSKYRESLGLPSTCICLGAIESTGFVSKNESVSVFLDGGGFHPTPINQVLGLLDLQIQNAGKFTNSMLSNFKPSKFKNNQQTSLFLKFDYLMNLKNNSEETKIENTGNKNIDELFIEKVSELFSMDESKINKNLRLIDYGADSLIIVQLKNWIDKEIGINLITIQQLQNNTISTSMKMILNSLMKNNQNIDDNNKDLPSNRIDYWKNEMKFEESIKPISNEIQSRNNSEKIILLTGTTGFLGGFLLFNMVRLDSCKLIYCLIRNKSKSNNPLDEIINNLKYHQLYEKLNQSQISKIIPIIGDLSMNKLGLSNDDYETISKNVNLIINPGADINQKSSYQDCKLVNVNGVKEIIKLSLSSLKQRIPIVNFSSFSVFFNQSLDKNFDESVLPSIDNIDNLPTEYMKSKVVGEYILLEASKKYNIPSILIRPPSIFLNPETGIGHISDFSLLSIQSCYELGYYPNQFENDFILINTITWLSNNITNIIMNDNCWTDSKMNIYNVHGKQIQSSLIIKPLEKHFNCKHINTNDWIDMVNNSNKKSCIKLKSFHSLDIILKSENNRYKPNENQSISLSTKSLLESMGSYNTDLEITDKMIISHINQIFNLNETI.

The region spanning 11–442 is the Ketosynthase family 3 (KS3) domain; sequence EKGVAIVGIG…GSNCCLLISE (432 aa). Residues cysteine 181, histidine 323, and histidine 362 each act as for beta-ketoacyl synthase activity in the active site. The acyl/malonyl transferase stretch occupies residues 635 to 668; sequence GVNPSFILGHSLGEISASYCSGMIDLDTFCYTVY. Serine 645 acts as the For acyl/malonyl transferase activity in catalysis. Residues 925-1047 form an N-terminal hotdog fold region; sequence IDHLGTSNSY…ANFQLLDHGN (123 aa). Positions 925–1209 constitute a PKS/mFAS DH domain; the sequence is IDHLGTSNSY…CKSLIPIKDS (285 aa). The active-site Proton acceptor; for dehydratase activity is histidine 959. The tract at residues 1064–1209 is C-terminal hotdog fold; the sequence is NLSKLTKNEL…CKSLIPIKDS (146 aa). The active-site Proton donor; for dehydratase activity is aspartate 1122. Residues 2293–2313 traverse the membrane as a helical segment; sequence LINFVMASSAISLIGSTDLCT. The 78-residue stretch at 2429–2506 folds into the Carrier domain; that stretch reads TGNKNIDELF…TSMKMILNSL (78 aa). Serine 2466 carries the O-(pantetheine 4'-phosphoryl)serine modification. Residues 2553–2573 form a helical membrane-spanning segment; sequence KIILLTGTTGFLGGFLLFNMV.

Pantetheine 4'-phosphate serves as cofactor.

The protein resides in the membrane. Functionally, probable polyketide synthase. The sequence is that of Probable polyketide synthase 9/36 (pks9) from Dictyostelium discoideum (Social amoeba).